A 248-amino-acid chain; its full sequence is Probable aquaporin TIP2-2 (248 aa).

Transmembrane regions (helical) follow at residues 21–41 and 55–75; these read AYVA…GSAI and AGLV…VAIG. Positions 84–86 match the NPA 1 motif; sequence NPA. A run of 3 helical transmembrane segments spans residues 87–109, 133–153, and 168–188; these read VTFG…WIAQ, LSGV…FGLV, and LGTI…LVAG. Positions 196–198 match the NPA 2 motif; that stretch reads NPA. Residues 210–230 traverse the membrane as a helical segment; that stretch reads YTNIWIYWVGPLVGGGLAGLV.

This sequence belongs to the MIP/aquaporin (TC 1.A.8) family. TIP (TC 1.A.8.10) subfamily. As to expression, expressed in roots and leaves.

It is found in the vacuole membrane. Functionally, aquaporins facilitate the transport of water and small neutral solutes across cell membranes. May be involved in transport from the vacuolar compartment to the cytoplasm. In Oryza sativa subsp. japonica (Rice), this protein is Probable aquaporin TIP2-2 (TIP2-2).